Consider the following 782-residue polypeptide: General transcription and DNA repair factor IIH helicase/translocase subunit XPB (782 aa).

The span at 1–11 shows a compositional bias: basic and acidic residues; that stretch reads MGKRDRVDRDK. Residues 1–52 are disordered; that stretch reads MGKRDRVDRDKKKSKKRQYEEEEEDEDDAPGNESQEAVPSAAGKQVDESSTK. Residues 6–18 carry the Nuclear localization signal motif; that stretch reads RVDRDKKKSKKRQ. A compositionally biased stretch (acidic residues) spans 20–30; that stretch reads EEEEEDEDDAP. Residue Ser-34 is modified to Phosphoserine. A Helicase ATP-binding domain is found at 328-489; it reads FGNGRARSGV…LNFLIGPKLY (162 aa). 341–348 contributes to the ATP binding site; it reads PCGAGKSL. A DEVH box motif is present at residues 442 to 445; the sequence is EVHT. Positions 543 to 703 constitute a Helicase C-terminal domain; it reads ACQFLIKFHE…AGMEEEELAF (161 aa). The residue at position 686 (Ser-686) is a Phosphoserine. Residue Ser-751 is modified to Phosphoserine; by CK2.

It belongs to the helicase family. RAD25/XPB subfamily. In terms of assembly, component of the 7-subunit TFIIH core complex composed of XPB/ERCC3, XPD/ERCC2, GTF2H1, GTF2H2, GTF2H3, GTF2H4 and GTF2H5, which is active in NER. The core complex associates with the 3-subunit CDK-activating kinase (CAK) module composed of CCNH/cyclin H, CDK7 and MNAT1 to form the 10-subunit holoenzyme (holo-TFIIH) active in transcription. Interacts with PUF60. Interacts with ATF7IP. Interacts with KAT2A; leading to KAT2A recruitment to promoters and acetylation of histones. Part of TBP-based Pol II pre-initiation complex (PIC), in which Pol II core assembles with general transcription factors and other specific initiation factors including GTF2E1, GTF2E2, GTF2F1, GTF2F2, TCEA1, ERCC2, ERCC3, GTF2H2, GTF2H3, GTF2H4, GTF2H5, GTF2A1, GTF2A2, GTF2B and TBP; this large multi-subunit PIC complex mediates DNA unwinding and targets Pol II core to the transcription start site where the first phosphodiester bond forms. In terms of processing, phosphorylation on Ser-751 by CK2 controls the 5'-excision activity of ERCC1-XPF endonuclease; phosphorylated protein inhibits the excision activity and thus NER. Dephosphorylation reactivates the 5'-excision step. Phosphorylation has no effect on transcription or the 3'-5' helicase activity.

Its subcellular location is the nucleus. It catalyses the reaction Couples ATP hydrolysis with the unwinding of duplex DNA by translocating in the 3'-5' direction.. It carries out the reaction ATP + H2O = ADP + phosphate + H(+). Its activity is regulated as follows. Phosphorylation on Ser-751 by CK2 controls the 5'-excision activity of ERCC1-XPF endonuclease; phosphorylated protein inhibits the excision activity and thus NER. ATPase activity is stimulated by TFIIH subunit p52 (GTF2H4). DNA translocase activity by this subunit in TFIIH is stimulated by XPA, ERCC5/XPG and XFP plus ERCC1. In terms of biological role, ATP-dependent 3'-5' DNA helicase/translocase; binds dsDNA rather than ssDNA, unzipping it in a translocase rather than classical helicase activity. Component of the general transcription and DNA repair factor IIH (TFIIH) core complex. When complexed to CDK-activating kinase (CAK), involved in RNA transcription by RNA polymerase II. The ATPase activity of XPB/ERCC3, but not its helicase activity, is required for DNA opening; it may wrap around the damaged DNA wedging it open, causing localized melting and twisting that allows XPD/ERCC2 helicase to anchor. The ATP-dependent helicase activity of XPB/ERCC3 may be required for promoter escape. Also involved in transcription-coupled nucleotide excision repair (NER) of damaged DNA. In NER, TFIIH acts by opening DNA around the lesion to allow the excision of the damaged oligonucleotide and its replacement by a new DNA fragment. The structure of the TFIIH transcription complex differs from the NER-TFIIH complex; large movements by XPD/ERCC2 and XPB/ERCC3 are stabilized by XPA. The sequence is that of General transcription and DNA repair factor IIH helicase/translocase subunit XPB (Ercc3) from Rattus norvegicus (Rat).